A 344-amino-acid chain; its full sequence is Follistatin (344 aa).

Residues 1 to 29 (MVCARHQPGGLCLLLLLLCQFMEDRSAQA) form the signal peptide. The region spanning 30 to 103 (GNCWLRQAKN…TCENVDCGPG (74 aa)) is the TB domain. Disulfide bonds link Cys32–Cys55, Cys42–Cys88, Cys56–Cys91, Cys95–Cys106, Cys100–Cys116, Cys118–Cys150, Cys122–Cys143, Cys132–Cys164, Cys168–Cys179, Cys173–Cys189, Cys192–Cys225, Cys196–Cys218, Cys207–Cys239, Cys245–Cys256, Cys250–Cys267, Cys270–Cys302, Cys274–Cys295, and Cys284–Cys316. The region spanning 94–117 (TCENVDCGPGKKCRMNKKNKPRCV) is the Follistatin-like 1 domain. A Kazal-like 1 domain is found at 112–166 (NKPRCVCAPDCSNITWKGPVCGLDGKTYRNECALLKARCKEQPELEVQYQGKCKK). Residue Asn124 is glycosylated (N-linked (GlcNAc...) asparagine). The region spanning 167 to 190 (TCRDVFCPGSSTCVVDQTNNAYCV) is the Follistatin-like 2 domain. One can recognise a Kazal-like 2 domain in the interval 186-241 (NAYCVTCNRICPEPSSSEQYLCGNDGVTYSSACHLRKATCLLGRSIGLAYEGKCIK). The Follistatin-like 3 domain occupies 244–268 (SCEDIQCGGGKKCLWDSKVGRGRCS). The Kazal-like 3 domain occupies 264–318 (RGRCSLCDELCPDSKSDEPVCASDNATYASECAMKEAACSSGVLLEVKHSGSCNS). Asn288 carries N-linked (GlcNAc...) asparagine glycosylation. A disordered region spans residues 315 to 344 (SCNSISEETEEEEEEEDQDYSFPISSILEW). A compositionally biased stretch (acidic residues) spans 321 to 333 (EETEEEEEEEDQD).

As to quaternary structure, interacts with GDF11. Interacts with activin A/INHBA. Interacts with myostatin/MSTN.

The protein resides in the secreted. Its subcellular location is the nucleus. The protein localises to the nucleolus. Multifunctional regulatory protein whose primary function is to antagonize members of the transforming growth factor beta (TGF-beta) superfamily including activin, myostatin, GDF11 or bone morphogenetic proteins (BMPs). Mechanistically, binds to these ligands in the extracellular space, blocking their type II receptor-binding site to inhibit downstream signaling. Plays an essential role in muscle fiber formation and growth both by preventing the repressive effects of myostatin and through SMAD3/AKT/mTOR signaling independently of myostatin. Also promotes neural differentiation by antagonizing the action BMP4. Acts as a specific inhibitor of the biosynthesis and secretion of pituitary follicle stimulating hormone (FSH) by sequestering activin A/INHBA. On the other hand, translocates into the nucleus where it down-regulates rRNA synthesis and ribosome biogenesis to maintain cellular energy homeostasis by binding to rDNA. This chain is Follistatin, found in Mus musculus (Mouse).